A 226-amino-acid polypeptide reads, in one-letter code: Ribosome maturation factor RimM (226 aa).

Residues 144–225 form the PRC barrel domain; sequence ADEFYWVDLI…RIVVDWEADY (82 aa).

It belongs to the RimM family. Binds ribosomal protein uS19.

The protein resides in the cytoplasm. Functionally, an accessory protein needed during the final step in the assembly of 30S ribosomal subunit, possibly for assembly of the head region. Essential for efficient processing of 16S rRNA. May be needed both before and after RbfA during the maturation of 16S rRNA. It has affinity for free ribosomal 30S subunits but not for 70S ribosomes. This Burkholderia ambifaria (strain ATCC BAA-244 / DSM 16087 / CCUG 44356 / LMG 19182 / AMMD) (Burkholderia cepacia (strain AMMD)) protein is Ribosome maturation factor RimM.